Consider the following 238-residue polypeptide: ATP synthase subunit O, mitochondrial (238 aa).

A mitochondrion-targeting transit peptide spans 1–36; the sequence is MANRFRSGISFFKTIAVTDSVSSVRSKSLFPALRTY. Thr90 carries the phosphothreonine modification.

It belongs to the ATPase delta chain family. As to quaternary structure, F-type ATPases have 2 components, CF(1) - the catalytic core - and CF(0) - the membrane proton channel. CF(1) has five subunits: alpha(3), beta(3), gamma(1), delta(1), epsilon(1). CF(0) has three main subunits: a, b and c.

The protein resides in the mitochondrion. Its subcellular location is the mitochondrion inner membrane. Mitochondrial membrane ATP synthase (F(1)F(0) ATP synthase or Complex V) produces ATP from ADP in the presence of a proton gradient across the membrane which is generated by electron transport complexes of the respiratory chain. F-type ATPases consist of two structural domains, F(1) - containing the extramembraneous catalytic core and F(0) - containing the membrane proton channel, linked together by a central stalk and a peripheral stalk. During catalysis, ATP synthesis in the catalytic domain of F(1) is coupled via a rotary mechanism of the central stalk subunits to proton translocation. Part of the complex F(0) domain and the peripheric stalk, which acts as a stator to hold the catalytic alpha(3)beta(3) subcomplex and subunit a/ATP6 static relative to the rotary elements. This chain is ATP synthase subunit O, mitochondrial, found in Arabidopsis thaliana (Mouse-ear cress).